The chain runs to 258 residues: Large ribosomal subunit protein uL3 (258 aa).

Belongs to the universal ribosomal protein uL3 family. In terms of assembly, part of the 50S ribosomal subunit. Forms a cluster with proteins L14 and L19.

One of the primary rRNA binding proteins, it binds directly near the 3'-end of the 23S rRNA, where it nucleates assembly of the 50S subunit. In Spiroplasma kunkelii, this protein is Large ribosomal subunit protein uL3.